Consider the following 78-residue polypeptide: NAD(P)H-quinone oxidoreductase subunit O (78 aa).

The protein belongs to the complex I NdhO subunit family. As to quaternary structure, NDH-1 can be composed of about 15 different subunits; different subcomplexes with different compositions have been identified which probably have different functions.

The protein localises to the cellular thylakoid membrane. The enzyme catalyses a plastoquinone + NADH + (n+1) H(+)(in) = a plastoquinol + NAD(+) + n H(+)(out). The catalysed reaction is a plastoquinone + NADPH + (n+1) H(+)(in) = a plastoquinol + NADP(+) + n H(+)(out). Its function is as follows. NDH-1 shuttles electrons from an unknown electron donor, via FMN and iron-sulfur (Fe-S) centers, to quinones in the respiratory and/or the photosynthetic chain. The immediate electron acceptor for the enzyme in this species is believed to be plastoquinone. Couples the redox reaction to proton translocation, and thus conserves the redox energy in a proton gradient. Cyanobacterial NDH-1 also plays a role in inorganic carbon-concentration. This Prochlorococcus marinus (strain AS9601) protein is NAD(P)H-quinone oxidoreductase subunit O.